A 177-amino-acid polypeptide reads, in one-letter code: Interleukin-19 (177 aa).

Residues 1-24 (MKLQCVSLWLLGTILILCSVDNHG) form the signal peptide. Cystine bridges form between Cys28/Cys121, Cys75/Cys127, and Cys76/Cys129. Residue Asn56 is glycosylated (N-linked (GlcNAc...) asparagine). Asn135 is a glycosylation site (N-linked (GlcNAc...) asparagine).

The protein belongs to the IL-10 family.

Its subcellular location is the secreted. In terms of biological role, cytokine that functions as an anti-inflammatory and proangiogenic factor. Polarizes adaptive immunity to an anti-inflammatory phenotype through induction of T-helper 2 responses by both down-regulation of IFN-gamma and up-regulation of IL4 and IL13. Produced by osteocytes, stimulates granulopoiesis and neutrophil formation. Exerts its biological effect through a receptor complex consisting of a heterodimer of IL20RA and IL20RB. In turn, activates the Janus kinase (JAK) and signal transducer and activator of transcription (STAT) pathway, and importantly, STAT3. The protein is Interleukin-19 (IL19) of Homo sapiens (Human).